We begin with the raw amino-acid sequence, 285 residues long: MTASVLLHSHWIDPVMFLYENGLDERNKNMEGFTGSNFPANQCRNLLAHPTSLAPNTTYTSNDVPISGIGEPGKQCSPCPATQSSPNASLPYGYFGSSYYPCRVSHGSVKACAQPSGYGDKYMDSPVSGEEFSSRAKEYAFYQGYSSAPYQPSYLDVPVVPALSAPSETRHEPLLPMEPYQPWTITNGWSGQVYCTKEQPQSNPLWKSSLQGNSGVRRGRKKRVPYTKVQLKELEREYAANKFITKDKRRRISAQTNLTERQVTIWFQNRRVKEKKVVNKFKSPS.

The segment at residues 219-278 is a DNA-binding region (homeobox); that stretch reads GRKKRVPYTKVQLKELEREYAANKFITKDKRRRISAQTNLTERQVTIWFQNRRVKEKKVV.

This sequence belongs to the Abd-B homeobox family.

It is found in the nucleus. Sequence-specific transcription factor which is part of a developmental regulatory system that provides cells with specific positional identities on the anterior-posterior axis. This Takifugu rubripes (Japanese pufferfish) protein is Homeobox protein Hox-A13b (hoxa13b).